We begin with the raw amino-acid sequence, 91 residues long: Methanol dehydrogenase [cytochrome c] subunit 2 (91 aa).

A signal peptide spans 1 to 22; the sequence is MKHVLTLLALASVFAVSNQALA. Cys-28 and Cys-34 are disulfide-bonded.

This sequence belongs to the methanol dehydrogenase subunit 2 family. As to quaternary structure, heterotetramer composed of 2 alpha and 2 beta subunits.

It is found in the cell inner membrane. It carries out the reaction 2 Fe(III)-[cytochrome cL] + a primary alcohol = 2 Fe(II)-[cytochrome cL] + an aldehyde + 2 H(+). Functionally, catalyzes the oxidation of primary alcohols including methanol. The polypeptide is Methanol dehydrogenase [cytochrome c] subunit 2 (moxI) (Methylophilus methylotrophus (Bacterium W3A1)).